A 320-amino-acid chain; its full sequence is Adhesin MafA 1 (320 aa).

The signal sequence occupies residues 1 to 18 (MQARLLIPILFSVFILSA). The N-palmitoyl cysteine moiety is linked to residue cysteine 19. Residue cysteine 19 is the site of S-diacylglycerol cysteine attachment. Residues 288-320 (HMGNSAPSVEADNSHEGYGYSDEAVRRHRQGQP) form a disordered region.

The protein belongs to the MafA family.

It is found in the cell outer membrane. The sequence is that of Adhesin MafA 1 (mafA1) from Neisseria meningitidis serogroup A / serotype 4A (strain DSM 15465 / Z2491).